The chain runs to 279 residues: uncharacterized protein (279 aa).

The first 21 residues, 1–21, serve as a signal peptide directing secretion; the sequence is MKIIRTLFLLLIAVYGSSVVA.

This sequence to E.coli YfcO.

This is an uncharacterized protein from Salmonella typhimurium (strain LT2 / SGSC1412 / ATCC 700720).